We begin with the raw amino-acid sequence, 148 residues long: Augurin (148 aa).

The signal sequence occupies residues 1–31 (MSTSSARPAVLALAGLALLLLLCLGPDGISG). Propeptides lie at residues 32–70 (NKLKKMLQKREGPVPSKTNVAVAENTAKEFLGGLKRAKR) and 133–148 (SRESFRHGASVNYNDY).

The protein belongs to the augurin family. In terms of tissue distribution, expressed in the intermediate lobe of pituitary, glomerular layer of adrenal cortex, choroid plexus and atrioventricular node of the heart. Expressed in the brain with high expression in the choroid plexus and the epithelial lining of the central canal and expression in the gray matter of the spinal cord (at protein level).

The protein localises to the secreted. The protein resides in the cytoplasm. It is found in the apical cell membrane. Probable hormone that may attenuate cell proliferation and induce senescence of oligodendrocyte and neural precursor cells in the central nervous system. ECRG4-induced senescence is characterized by G1 arrest, RB1 dephosphorylation and accelerated CCND1 and CCND3 proteasomal degradation. The protein is Augurin of Mus musculus (Mouse).